A 213-amino-acid polypeptide reads, in one-letter code: Orotate phosphoribosyltransferase (213 aa).

Lys26 provides a ligand contact to 5-phospho-alpha-D-ribose 1-diphosphate. An orotate-binding site is contributed by Phe34–Phe35. 5-phospho-alpha-D-ribose 1-diphosphate contacts are provided by residues Tyr72 to Lys73, Arg99, Lys100, Lys103, His105, and Asp124 to Ala132. Orotate contacts are provided by Thr128 and Arg156.

This sequence belongs to the purine/pyrimidine phosphoribosyltransferase family. PyrE subfamily. Homodimer. Mg(2+) is required as a cofactor.

The enzyme catalyses orotidine 5'-phosphate + diphosphate = orotate + 5-phospho-alpha-D-ribose 1-diphosphate. It functions in the pathway pyrimidine metabolism; UMP biosynthesis via de novo pathway; UMP from orotate: step 1/2. Its function is as follows. Catalyzes the transfer of a ribosyl phosphate group from 5-phosphoribose 1-diphosphate to orotate, leading to the formation of orotidine monophosphate (OMP). In Photobacterium profundum (strain SS9), this protein is Orotate phosphoribosyltransferase.